The sequence spans 262 residues: tRNA pseudouridine synthase A (262 aa).

The active-site Nucleophile is the D51. Y106 contributes to the substrate binding site.

Belongs to the tRNA pseudouridine synthase TruA family.

It carries out the reaction uridine(38/39/40) in tRNA = pseudouridine(38/39/40) in tRNA. Functionally, formation of pseudouridine at positions 38, 39 and 40 in the anticodon stem and loop of transfer RNAs. The protein is tRNA pseudouridine synthase A of Pyrococcus horikoshii (strain ATCC 700860 / DSM 12428 / JCM 9974 / NBRC 100139 / OT-3).